A 267-amino-acid polypeptide reads, in one-letter code: GTP cyclohydrolase MptA (267 aa).

Belongs to the GTP cyclohydrolase IV family. Homodimer. Fe(2+) is required as a cofactor.

The catalysed reaction is GTP + H2O = 7,8-dihydroneopterin 2',3'-cyclic phosphate + formate + diphosphate + H(+). Its pathway is cofactor biosynthesis; 5,6,7,8-tetrahydromethanopterin biosynthesis. In terms of biological role, converts GTP to 7,8-dihydro-D-neopterin 2',3'-cyclic phosphate, the first intermediate in the biosynthesis of coenzyme methanopterin. The sequence is that of GTP cyclohydrolase MptA from Pyrococcus furiosus (strain ATCC 43587 / DSM 3638 / JCM 8422 / Vc1).